The primary structure comprises 157 residues: 3-dehydroquinate dehydratase (157 aa).

Tyrosine 24 acts as the Proton acceptor in catalysis. 3 residues coordinate substrate: asparagine 75, histidine 81, and aspartate 88. Histidine 101 (proton donor) is an active-site residue. Substrate is bound by residues 102 to 103 (LS) and arginine 112.

The protein belongs to the type-II 3-dehydroquinase family. As to quaternary structure, homododecamer.

The catalysed reaction is 3-dehydroquinate = 3-dehydroshikimate + H2O. It participates in metabolic intermediate biosynthesis; chorismate biosynthesis; chorismate from D-erythrose 4-phosphate and phosphoenolpyruvate: step 3/7. In terms of biological role, catalyzes a trans-dehydration via an enolate intermediate. The protein is 3-dehydroquinate dehydratase of Brucella abortus (strain S19).